We begin with the raw amino-acid sequence, 1025 residues long: Exportin-T (1025 aa).

This sequence belongs to the exportin family.

It localises to the nucleus. Its subcellular location is the cytoplasm. In terms of biological role, tRNA nucleus export receptor which facilitates tRNA translocation across the nuclear pore complex. Involved in pre-tRNA splicing, probably by affecting the interaction of pre-tRNA with splicing endonuclease. The polypeptide is Exportin-T (LOS1) (Yarrowia lipolytica (strain CLIB 122 / E 150) (Yeast)).